Reading from the N-terminus, the 234-residue chain is Acetylxylan esterase 2 (234 aa).

Positions 1–17 (MHSKFFAASLLGLGAAA) are cleaved as a signal peptide. A propeptide spanning residues 18-27 (IPLEGVMEKR) is cleaved from the precursor. Cystine bridges form between Cys29-Cys106 and Cys73-Cys79. Residue Ser117 is part of the active site. 3 disulfide bridges follow: Cys128–Cys188, Cys174–Cys206, and Cys198–Cys205. Asp202 is a catalytic residue. Asn207 is a glycosylation site (N-linked (GlcNAc...) asparagine). His214 is a catalytic residue.

The protein belongs to the cutinase family. Acetylxylan esterase subfamily. In terms of assembly, monomer.

It localises to the secreted. It catalyses the reaction Deacetylation of xylans and xylo-oligosaccharides.. Its pathway is glycan degradation; xylan degradation. Degrades acetylated xylans by cleaving acetyl side groups from the hetero-xylan backbone. The protein is Acetylxylan esterase 2 (axe-2) of Talaromyces purpureogenus (Soft rot fungus).